A 110-amino-acid chain; its full sequence is Insulin (110 aa).

Residues 1–24 (MALWMRLLPLLAFLILWEPSPAHA) form the signal peptide. 3 disulfide bridges follow: C31–C96, C43–C109, and C95–C100. The propeptide at 57-87 (GVDDPQMPQLELGGSPGAGDLRALALEVARQ) is c peptide.

This sequence belongs to the insulin family. Heterodimer of a B chain and an A chain linked by two disulfide bonds.

The protein resides in the secreted. Insulin decreases blood glucose concentration. It increases cell permeability to monosaccharides, amino acids and fatty acids. It accelerates glycolysis, the pentose phosphate cycle, and glycogen synthesis in liver. The protein is Insulin (INS) of Psammomys obesus (Fat sand rat).